The sequence spans 196 residues: ATP-dependent Clp protease proteolytic subunit (196 aa).

The Nucleophile role is filled by Ser101. Residue His126 is part of the active site.

It belongs to the peptidase S14 family. As to quaternary structure, component of the chloroplastic Clp protease core complex.

The protein localises to the plastid. The protein resides in the chloroplast stroma. It catalyses the reaction Hydrolysis of proteins to small peptides in the presence of ATP and magnesium. alpha-casein is the usual test substrate. In the absence of ATP, only oligopeptides shorter than five residues are hydrolyzed (such as succinyl-Leu-Tyr-|-NHMec, and Leu-Tyr-Leu-|-Tyr-Trp, in which cleavage of the -Tyr-|-Leu- and -Tyr-|-Trp bonds also occurs).. Its function is as follows. Cleaves peptides in various proteins in a process that requires ATP hydrolysis. Has a chymotrypsin-like activity. Plays a major role in the degradation of misfolded proteins. This chain is ATP-dependent Clp protease proteolytic subunit, found in Panax ginseng (Korean ginseng).